The following is a 355-amino-acid chain: RNA 3'-terminal phosphate cyclase (355 aa).

ATP contacts are provided by residues Gln-100 and 300–304 (HLADQ). The active-site Tele-AMP-histidine intermediate is His-325.

The protein belongs to the RNA 3'-terminal cyclase family. Type 1 subfamily.

Its subcellular location is the cytoplasm. It carries out the reaction a 3'-end 3'-phospho-ribonucleotide-RNA + ATP = a 3'-end 2',3'-cyclophospho-ribonucleotide-RNA + AMP + diphosphate. In terms of biological role, catalyzes the conversion of 3'-phosphate to a 2',3'-cyclic phosphodiester at the end of RNA. The mechanism of action of the enzyme occurs in 3 steps: (A) adenylation of the enzyme by ATP; (B) transfer of adenylate to an RNA-N3'P to produce RNA-N3'PP5'A; (C) and attack of the adjacent 2'-hydroxyl on the 3'-phosphorus in the diester linkage to produce the cyclic end product. The biological role of this enzyme is unknown but it is likely to function in some aspects of cellular RNA processing. This Methanosarcina acetivorans (strain ATCC 35395 / DSM 2834 / JCM 12185 / C2A) protein is RNA 3'-terminal phosphate cyclase.